The primary structure comprises 544 residues: Chaperonin GroEL (544 aa).

ATP contacts are provided by residues 30 to 33, K51, 87 to 91, G415, 478 to 480, and D494; these read TLGP, DGTTT, and NAA.

Belongs to the chaperonin (HSP60) family. In terms of assembly, forms a cylinder of 14 subunits composed of two heptameric rings stacked back-to-back. Interacts with the co-chaperonin GroES.

Its subcellular location is the cytoplasm. The enzyme catalyses ATP + H2O + a folded polypeptide = ADP + phosphate + an unfolded polypeptide.. In terms of biological role, together with its co-chaperonin GroES, plays an essential role in assisting protein folding. The GroEL-GroES system forms a nano-cage that allows encapsulation of the non-native substrate proteins and provides a physical environment optimized to promote and accelerate protein folding. The sequence is that of Chaperonin GroEL from Geobacter sulfurreducens (strain ATCC 51573 / DSM 12127 / PCA).